A 207-amino-acid chain; its full sequence is MTTIAVVPVQRLSTAKSRLAARLAPDERRTLVLSLLDHVLTALNAARQVDAVILVSPDPEVLEHAARRGAIALLQPGVGLNEGLRLGRDEALRRGADTLLIVLADLPWITADEIDALVAALPERGIALAPDRHDHGTNAAALRPPDAIEPAFGAGSFARHQAQARSRGLPLRELRVQGLAFDIDTPADLEELAGHAPVGASSDESGT.

The phosphoenolpyruvate site is built by threonine 137, glycine 153, and serine 156.

Belongs to the CofC family.

It carries out the reaction phosphoenolpyruvate + GTP + H(+) = enolpyruvoyl-2-diphospho-5'-guanosine + diphosphate. It functions in the pathway cofactor biosynthesis; coenzyme F420 biosynthesis. In terms of biological role, guanylyltransferase that catalyzes the activation of phosphoenolpyruvate (PEP) as enolpyruvoyl-2-diphospho-5'-guanosine, via the condensation of PEP with GTP. It is involved in the biosynthesis of coenzyme F420, a hydride carrier cofactor. The chain is Phosphoenolpyruvate guanylyltransferase from Sphaerobacter thermophilus (strain ATCC 49802 / DSM 20745 / KCCM 41009 / NCIMB 13125 / S 6022).